A 106-amino-acid polypeptide reads, in one-letter code: Putative double-stranded DNA mimic protein VIBHAR_02752 (106 aa).

This sequence belongs to the putative dsDNA mimic protein family.

May act as a double-stranded DNA (dsDNA) mimic. Probably regulates the activity of a dsDNA-binding protein. In Vibrio campbellii (strain ATCC BAA-1116), this protein is Putative double-stranded DNA mimic protein VIBHAR_02752.